Consider the following 321-residue polypeptide: Ubiquinone biosynthesis O-methyltransferase, mitochondrial (321 aa).

Positions 102, 135, 157, and 210 each coordinate S-adenosyl-L-methionine. Glu211, Glu214, and His215 together coordinate Mg(2+).

This sequence belongs to the class I-like SAM-binding methyltransferase superfamily. UbiG/COQ3 family. In terms of assembly, component of a multi-subunit COQ enzyme complex. It depends on Mg(2+) as a cofactor.

It localises to the mitochondrion inner membrane. It carries out the reaction a 3,4-dihydroxy-5-(all-trans-polyprenyl)benzoate + S-adenosyl-L-methionine = a 4-hydroxy-3-methoxy-5-(all-trans-polyprenyl)benzoate + S-adenosyl-L-homocysteine + H(+). The catalysed reaction is a 3-demethylubiquinone + S-adenosyl-L-methionine = a ubiquinone + S-adenosyl-L-homocysteine. The enzyme catalyses a 3-demethylubiquinol + S-adenosyl-L-methionine = a ubiquinol + S-adenosyl-L-homocysteine + H(+). The protein operates within cofactor biosynthesis; ubiquinone biosynthesis. In terms of biological role, O-methyltransferase required for two non-consecutive steps during ubiquinone biosynthesis. Catalyzes the 2 O-methylation of 3,4-dihydroxy-5-(all-trans-polyprenyl)benzoic acid into 4-hydroxy-3-methoxy-5-(all-trans-polyprenyl)benzoic acid. Also catalyzes the last step of ubiquinone biosynthesis by mediating methylation of 3-demethylubiquinone into ubiquinone. Also able to mediate the methylation of 3-demethylubiquinol into ubiquinol. In Dictyostelium discoideum (Social amoeba), this protein is Ubiquinone biosynthesis O-methyltransferase, mitochondrial.